Reading from the N-terminus, the 268-residue chain is 3-methyl-2-oxobutanoate hydroxymethyltransferase (268 aa).

Mg(2+) is bound by residues Asp-46 and Asp-85. 3-methyl-2-oxobutanoate contacts are provided by residues 46–47 (DS), Asp-85, and Lys-115. Position 117 (Glu-117) interacts with Mg(2+). Catalysis depends on Glu-184, which acts as the Proton acceptor.

The protein belongs to the PanB family. Homodecamer; pentamer of dimers. It depends on Mg(2+) as a cofactor.

The protein resides in the cytoplasm. It catalyses the reaction 3-methyl-2-oxobutanoate + (6R)-5,10-methylene-5,6,7,8-tetrahydrofolate + H2O = 2-dehydropantoate + (6S)-5,6,7,8-tetrahydrofolate. It participates in cofactor biosynthesis; (R)-pantothenate biosynthesis; (R)-pantoate from 3-methyl-2-oxobutanoate: step 1/2. In terms of biological role, catalyzes the reversible reaction in which hydroxymethyl group from 5,10-methylenetetrahydrofolate is transferred onto alpha-ketoisovalerate to form ketopantoate. The chain is 3-methyl-2-oxobutanoate hydroxymethyltransferase from Magnetococcus marinus (strain ATCC BAA-1437 / JCM 17883 / MC-1).